We begin with the raw amino-acid sequence, 492 residues long: Cytochrome P450 monooxygenase ATEG_03631 (492 aa).

The chain crosses the membrane as a helical span at residues Phe-10–Leu-30. Residue Asn-309 is glycosylated (N-linked (GlcNAc...) asparagine). Residue Cys-457 participates in heme binding.

It belongs to the cytochrome P450 family. Heme serves as cofactor.

It localises to the membrane. Its pathway is secondary metabolite biosynthesis. Its function is as follows. Cytochrome P450 monooxygenase; part of the cluster A that mediates the biosynthesis of azasperpyranones, members of the azaphilone family that exhibit anti-cancer activities. Azasperpyranones are synthesized by 2 clusters, A and B. Cluster A is responsible for the production of the polyhydric phenol moiety while the azaphilonoid scaffold is produced by the cluster B. The non-reducing polyketide synthase ATEG_03629 produces 5-methyl orsellinic acid, which is then reduced to 5-methyl orsellinic aldehyde by the NRPS-like protein ATEG_03630. 5-methyl orsellinic aldehyde is then first hydroxylated by the FAD-dependent monooxygenase ATEG_03635 and subsequently hydroxylated by the cytochrome P450 monooxygenase ATEG_03631 to produce the unstable polyhydric phenol precursor of azasperpyranones. On the other hand, the polyketide synthase ATEG_07659 is responsible for producing the 3,5-dimethyloctadienone moiety from acetyl-CoA, three malonyl-CoA, and two S-adenosyl methionines (SAM). The 3,5-dimethyloctadienone moiety is then loaded onto the SAT domain of ATEG_07661 and extended with four malonyl-CoA and one SAM, which leads to the formation of 2,4-dihydroxy-6-(5,7-dimethyl-2-oxo-trans-3-trans-5-nonadienyl)-3-methylbenzaldehyde (compound 8) after reductive release and aldol condensation. The FAD-dependent monooxygenase ATEG_07662 is the next enzyme in the biosynthesis sequence and hydroxylates the side chain at the benzylic position of compound 8. In Aspergillus nidulans, afoF, the ortholog of the FAD-dependent oxygenase ATEG_07660, is the key enzyme for the biosynthesis of asperfuranone by catalyzing the hydroxylation at C-8 of to prevent the formation of a six-membered ring hemiacetal intermediate and thus facilitating the formation of a five-membered ring to produce asperfuranone. In Aspergillus terreus, ATEG_07660 is probably not functional, which leads to the formation of the six-membered ring hemiacetal intermediate presperpyranone instead of asperfuranone. Finally, ATEG_03636 is involved in the condensation of the polyhydric phenol moiety produced by cluster A and the perasperpyranone precursor produced by cluster B, to yield azasperpyranone A. Further modifications of azasperpyranone A result in the production of derivatives, including azasperpyranone B to F. This is Cytochrome P450 monooxygenase ATEG_03631 from Aspergillus terreus (strain NIH 2624 / FGSC A1156).